A 1236-amino-acid polypeptide reads, in one-letter code: DNA-directed RNA polymerase subunit beta (1236 aa).

The interval 1185–1236 (IEGSEDYTEPKQPNDNYLEEEENKDKESDYDEDLNFDDLTKGLQLDDFNDEH) is disordered. Acidic residues predominate over residues 1201–1220 (YLEEEENKDKESDYDEDLNF).

This sequence belongs to the RNA polymerase beta chain family. As to quaternary structure, the RNAP catalytic core consists of 2 alpha, 1 beta, 1 beta' and 1 omega subunit. When a sigma factor is associated with the core the holoenzyme is formed, which can initiate transcription.

It catalyses the reaction RNA(n) + a ribonucleoside 5'-triphosphate = RNA(n+1) + diphosphate. Functionally, DNA-dependent RNA polymerase catalyzes the transcription of DNA into RNA using the four ribonucleoside triphosphates as substrates. This is DNA-directed RNA polymerase subunit beta from Clostridium tetani (strain Massachusetts / E88).